We begin with the raw amino-acid sequence, 105 residues long: Guanidinium exporter (105 aa).

The chain crosses the membrane as a helical span at residues 1–21 (MSWIILVIAGLLEVVWAVGLK). The Cytoplasmic portion of the chain corresponds to 22–28 (YTHGFSR). Residues 29–49 (LTPSVITVTAMIVSMALLAWA) form a helical membrane-spanning segment. The Periplasmic portion of the chain corresponds to 50 to 57 (MKSLPVGT). Residues 58–78 (AYAVWTGIGAVGAAITGIVLL) traverse the membrane as a helical segment. The Cytoplasmic segment spans residues 79–81 (GES). A helical transmembrane segment spans residues 82-102 (ANPMRLASLALIVLGIIGLKL). Residues 103 to 105 (STH) are Periplasmic-facing.

It belongs to the drug/metabolite transporter (DMT) superfamily. Small multidrug resistance (SMR) (TC 2.A.7.1) family. Gdx/SugE subfamily.

The protein resides in the cell inner membrane. Functionally, guanidinium ion exporter. Couples guanidinium export to the proton motive force, exchanging one guanidinium ion for two protons. This Escherichia coli O157:H7 protein is Guanidinium exporter.